Here is a 177-residue protein sequence, read N- to C-terminus: Ribosome maturation factor RimP (177 aa).

Belongs to the RimP family.

It localises to the cytoplasm. Its function is as follows. Required for maturation of 30S ribosomal subunits. This is Ribosome maturation factor RimP from Methylibium petroleiphilum (strain ATCC BAA-1232 / LMG 22953 / PM1).